Consider the following 295-residue polypeptide: 4-diphosphocytidyl-2-C-methyl-D-erythritol kinase (295 aa).

Residue K22 is part of the active site. An ATP-binding site is contributed by 106–116 (PAGGGFGGGSS). Residue D148 is part of the active site.

This sequence belongs to the GHMP kinase family. IspE subfamily.

The enzyme catalyses 4-CDP-2-C-methyl-D-erythritol + ATP = 4-CDP-2-C-methyl-D-erythritol 2-phosphate + ADP + H(+). The protein operates within isoprenoid biosynthesis; isopentenyl diphosphate biosynthesis via DXP pathway; isopentenyl diphosphate from 1-deoxy-D-xylulose 5-phosphate: step 3/6. Catalyzes the phosphorylation of the position 2 hydroxy group of 4-diphosphocytidyl-2C-methyl-D-erythritol. This Xanthomonas euvesicatoria pv. vesicatoria (strain 85-10) (Xanthomonas campestris pv. vesicatoria) protein is 4-diphosphocytidyl-2-C-methyl-D-erythritol kinase.